Consider the following 206-residue polypeptide: Small ribosomal subunit protein uS4 (206 aa).

One can recognise an S4 RNA-binding domain in the interval 93 to 153 (TRLDALVLRA…PKSQTMVPFQ (61 aa)).

Belongs to the universal ribosomal protein uS4 family. Part of the 30S ribosomal subunit. Contacts protein S5. The interaction surface between S4 and S5 is involved in control of translational fidelity.

Functionally, one of the primary rRNA binding proteins, it binds directly to 16S rRNA where it nucleates assembly of the body of the 30S subunit. In terms of biological role, with S5 and S12 plays an important role in translational accuracy. This is Small ribosomal subunit protein uS4 from Bifidobacterium animalis subsp. lactis (strain AD011).